Reading from the N-terminus, the 1052-residue chain is F-box/WD repeat-containing protein 10 (1052 aa).

One copy of the WD 1 repeat lies at 169–206; it reads GLNQDITDVCFSPEKDHSSKSATSQVYWTAKTQHTSLP. The 48-residue stretch at 276 to 323 folds into the F-box domain; the sequence is DFIRYLPIHLSKYILRMLDRHTLNKCASVSQHWAAMAQQVKMDLSAHG. WD repeat units follow at residues 409–447, 451–490, 493–532, 534–569, 572–609, and 611–652; these read SDTW…AIPV, GHAG…CTRI, GHQG…KTFR, KDPI…LVKT, GHEG…ERCL, and AFKH…KVLK. A coiled-coil region spans residues 690–719; it reads YAVEKTKQKKNKEKEEEKEENSLMEILSKC. Positions 766–805 are disordered; sequence LQSQGKSKSPRRDADDVEKAQKQGQLETPGKLPSHPKKKS. A compositionally biased stretch (basic and acidic residues) spans 775–786; it reads PRRDADDVEKAQ. The stretch at 986–1010 forms a coiled coil; the sequence is VLLTVKEEKEHQEAKMKEYQAREST.

Probable substrate-recognition component of a SCF (SKP1-CUL1-F-box protein)-type E3 ubiquitin ligase complex which mediates the ubiquitination and subsequent proteasomal degradation of target proteins. Overexpression is leading to degradation of CBX5 and CBX1. The chain is F-box/WD repeat-containing protein 10 (FBXW10) from Homo sapiens (Human).